Consider the following 241-residue polypeptide: Interleukin-6 (241 aa).

The tract at residues 1–25 is disordered; sequence MNFTEGCEATGRRPGSAGSRRRRAP. Residues 1–46 form the signal peptide; sequence MNFTEGCEATGRRPGSAGSRRRRAPRPGPVALLPLLLPLLLPPAAA. Cysteine 122 and cysteine 132 form a disulfide bridge.

It belongs to the IL-6 superfamily. In terms of assembly, component of a hexamer of two molecules each of IL6, IL6R and IL6ST; first binds to IL6R to associate with the signaling subunit IL6ST.

It is found in the secreted. Its function is as follows. Cytokine with a wide variety of biological functions in immunity, tissue regeneration, and metabolism. Binds to IL6R, then the complex associates to the signaling subunit IL6ST/gp130 to trigger the intracellular IL6-signaling pathway. The interaction with the membrane-bound IL6R and IL6ST stimulates 'classic signaling', whereas the binding of IL6 and soluble IL6R to IL6ST stimulates 'trans-signaling'. Alternatively, 'cluster signaling' occurs when membrane-bound IL6:IL6R complexes on transmitter cells activate IL6ST receptors on neighboring receiver cells. The chain is Interleukin-6 (IL6) from Gallus gallus (Chicken).